A 479-amino-acid chain; its full sequence is MNILFATSEAFPFIKTGGLGDVSYALPKALKRKGTDIRVILPKYSSIPQEYADNMRKVAEFTVGVGWRSQYCGLLELEKDGVKFYFIDNEYYFKRNSAYAQMDDGERFSFFSRAILESINHISDFTPDVLHCNDWHTAMTIPMLRDQYFNNPKLNNIKTVYTIHNLKYQGRFGKEILWELLGFGDEYFSEDKFKYYDSISFMKAGIVYADAITTVSPTYAEEIKTEYYGEGLNGLLQSRSKDLYGILNGIDTDVNNPSTDMFLFDKYDVNNLEAKARNKEKLQEMLHLPKNRDIPMIGIVARLEEQKGFELIKEVIEELLQENIQLVVLGTGDQRYEDMFKFFAWKYPDKLSANIYFDGGLAQKIYAASDMFLMPSRFEPCGIGQLIALRYGSVPIVRETGGLNDTVFSYNEFTGEGNGFSFTSFNARDMLYTIKRAIGFYYDKDVWSKLVQRGMNGDYSWEKAAEKYMRVYSNILHKW.

Lys15 serves as a coordination point for ADP-alpha-D-glucose.

It belongs to the glycosyltransferase 1 family. Bacterial/plant glycogen synthase subfamily.

It carries out the reaction [(1-&gt;4)-alpha-D-glucosyl](n) + ADP-alpha-D-glucose = [(1-&gt;4)-alpha-D-glucosyl](n+1) + ADP + H(+). It functions in the pathway glycan biosynthesis; glycogen biosynthesis. Functionally, synthesizes alpha-1,4-glucan chains using ADP-glucose. The protein is Glycogen synthase of Clostridium novyi (strain NT).